Consider the following 118-residue polypeptide: Non-specific lipid-transfer protein 3 (118 aa).

An N-terminal signal peptide occupies residues 1 to 25; the sequence is MARSMNLACVALVMCMVVIAPMAEA. 4 disulfide bridges follow: Cys-29-Cys-76, Cys-39-Cys-53, Cys-54-Cys-99, and Cys-74-Cys-113.

It belongs to the plant LTP family.

Functionally, plant non-specific lipid-transfer proteins transfer phospholipids as well as galactolipids across membranes. May play a role in wax or cutin deposition in the cell walls of expanding epidermal cells and certain secretory tissues. The chain is Non-specific lipid-transfer protein 3 from Lens culinaris (Lentil).